The primary structure comprises 894 residues: Disease resistance protein SUMM2 (894 aa).

Residues 31 to 71 (ELSKNVVAMKKDMEVLKKKRDDVKRRVDIEEFTRRRERLSQ) adopt a coiled-coil conformation. The region spanning 140–443 (TLATPIARIE…CEGFIDENES (304 aa)) is the NB-ARC domain. 183–190 (GMGGVGKT) is a binding site for ATP. LRR repeat units lie at residues 517–538 (SVRR…PECL), 539–561 (ELTT…FFRC), 564–586 (MLVV…ISKL), 588–610 (SLRY…QELK), 611–633 (KLRY…SNIS), 634–656 (SLRK…EELQ), and 660–681 (HLEV…LNAP).

This sequence belongs to the disease resistance NB-LRR family. As to quaternary structure, interacts with PAT1.

With respect to regulation, negatively regulated by the MEKK1-MKK1-MKK2-MPK4 kinase cascade. Its function is as follows. Disease resistance protein that mediates defense responses against the bacterial pathogen Pseudomonas syringae pv tomato strain DC3000, and the virulent oomycete Hyaloperonospora arabidopsidis isolate Noco2. Becomes active when the MEKK1-MKK1-MKK2-MPK4 kinase cascade is disrupted by the microbial effector hopAI1. Does not seem to be required for the activation of MPK4 by flg22, or flg22-induced up-regulation of PAD3. Functions downstream of MEKK2/SUMM1 in immune responses, including cell death and defense responses. This is Disease resistance protein SUMM2 from Arabidopsis thaliana (Mouse-ear cress).